We begin with the raw amino-acid sequence, 121 residues long: UPF0102 protein AAur_2443 (121 aa).

The protein belongs to the UPF0102 family.

In Paenarthrobacter aurescens (strain TC1), this protein is UPF0102 protein AAur_2443.